A 229-amino-acid chain; its full sequence is Flagellar L-ring protein (229 aa).

A signal peptide spans 1 to 23 (MNPLTRVALAVAAFAALVLALSA). A lipid anchor (N-palmitoyl cysteine) is attached at C24. A lipid anchor (S-diacylglycerol cysteine) is attached at C24.

This sequence belongs to the FlgH family. The basal body constitutes a major portion of the flagellar organelle and consists of four rings (L,P,S, and M) mounted on a central rod.

The protein localises to the cell outer membrane. The protein resides in the bacterial flagellum basal body. Assembles around the rod to form the L-ring and probably protects the motor/basal body from shearing forces during rotation. The chain is Flagellar L-ring protein from Anaeromyxobacter sp. (strain K).